Consider the following 257-residue polypeptide: Lipopolysaccharide core biosynthesis glycosyltransferase KdtX (257 aa).

Belongs to the glycosyltransferase 2 family. WaaE/KdtX subfamily.

It functions in the pathway bacterial outer membrane biogenesis; LPS core biosynthesis. The sequence is that of Lipopolysaccharide core biosynthesis glycosyltransferase KdtX (kdtX) from Serratia marcescens.